A 257-amino-acid chain; its full sequence is Small ribosomal subunit protein eS1 (257 aa).

Positions 236-257 (TSAEGEKIERPDDYEPPVQESV) are disordered. Positions 239–248 (EGEKIERPDD) are enriched in basic and acidic residues.

It belongs to the eukaryotic ribosomal protein eS1 family. As to quaternary structure, component of the small ribosomal subunit. Mature ribosomes consist of a small (40S) and a large (60S) subunit. The 40S subunit contains about 33 different proteins and 1 molecule of RNA (18S). The 60S subunit contains about 49 different proteins and 3 molecules of RNA (28S, 5.8S and 5S).

Its subcellular location is the cytoplasm. This is Small ribosomal subunit protein eS1 from Brugia malayi (Filarial nematode worm).